The sequence spans 360 residues: N-acetylmuramoyl-L-alanine amidase CwlL (360 aa).

The signal sequence occupies residues 1 to 39 (MVKVVKNFVKVNQYTRPGLKLAGVKGIVMHYTATPGASA). The region spanning 40–154 (LNERDYFNGT…DVTNKICPAP (115 aa)) is the N-acetylmuramoyl-L-alanine amidase domain. 4 repeat units span residues 166–191 (RKKVDSLLGNKTVSKTTSSTSQSSKS), 196–259 (LKKG…EKAL), 265–289 (KKKKPSSNGKKTSYPLPSGIYKVKS), and 291–355 (LMKG…KAKL). 2 2 X approximate repeats regions span residues 166 to 289 (RKKV…KVKS) and 196 to 355 (LKKG…KAKL).

The protein belongs to the N-acetylmuramoyl-L-alanine amidase 2 family.

Its subcellular location is the secreted. It catalyses the reaction Hydrolyzes the link between N-acetylmuramoyl residues and L-amino acid residues in certain cell-wall glycopeptides.. The polypeptide is N-acetylmuramoyl-L-alanine amidase CwlL (cwlL) (Bacillus licheniformis).